The sequence spans 454 residues: GTPase Der (454 aa).

EngA-type G domains follow at residues 4 to 168 (PQVA…PEKD) and 178 to 352 (MKIA…KQAQ). GTP-binding positions include 10–17 (GRPNVGKS), 57–61 (DTGGM), 120–123 (NKAD), 184–191 (GRRNVGKS), 231–235 (DTPGL), and 296–299 (NKWD). The region spanning 353–437 (SRVSTGELNR…PIKLYMQQRS (85 aa)) is the KH-like domain.

It belongs to the TRAFAC class TrmE-Era-EngA-EngB-Septin-like GTPase superfamily. EngA (Der) GTPase family. As to quaternary structure, associates with the 50S ribosomal subunit.

Its function is as follows. GTPase that plays an essential role in the late steps of ribosome biogenesis. The polypeptide is GTPase Der (Rhodopirellula baltica (strain DSM 10527 / NCIMB 13988 / SH1)).